Here is a 392-residue protein sequence, read N- to C-terminus: Lipid-A-disaccharide synthase (392 aa).

This sequence belongs to the LpxB family.

It carries out the reaction a lipid X + a UDP-2-N,3-O-bis[(3R)-3-hydroxyacyl]-alpha-D-glucosamine = a lipid A disaccharide + UDP + H(+). It functions in the pathway bacterial outer membrane biogenesis; LPS lipid A biosynthesis. Functionally, condensation of UDP-2,3-diacylglucosamine and 2,3-diacylglucosamine-1-phosphate to form lipid A disaccharide, a precursor of lipid A, a phosphorylated glycolipid that anchors the lipopolysaccharide to the outer membrane of the cell. This chain is Lipid-A-disaccharide synthase, found in Syntrophotalea carbinolica (strain DSM 2380 / NBRC 103641 / GraBd1) (Pelobacter carbinolicus).